Consider the following 270-residue polypeptide: Protein N-terminal and lysine N-methyltransferase EFM7 (270 aa).

The interval methionine 1–lysine 45 is disordered. S-adenosyl-L-methionine contacts are provided by residues tryptophan 63, glycine 89–alanine 91, aspartate 111, tryptophan 158, and serine 182.

Belongs to the class I-like SAM-binding methyltransferase superfamily. EFM7 family.

Its subcellular location is the cytoplasm. Its function is as follows. S-adenosyl-L-methionine-dependent protein methyltransferase that trimethylates the N-terminal glycine 'Gly-2' of elongation factor 1-alpha, before also catalyzing the mono- and dimethylation of 'Lys-3'. This Kluyveromyces lactis (strain ATCC 8585 / CBS 2359 / DSM 70799 / NBRC 1267 / NRRL Y-1140 / WM37) (Yeast) protein is Protein N-terminal and lysine N-methyltransferase EFM7.